The primary structure comprises 46 residues: DNA-directed RNA polymerases I, II, and III subunit rpabc4 (46 aa).

Zn(2+) contacts are provided by Cys7, Cys10, Cys24, and Cys27. The C4-type zinc finger occupies 7–27 (CGECGAEHEIKPKEPVKCKDC).

Belongs to the archaeal Rpo12/eukaryotic RPC10 RNA polymerase subunit family. In terms of assembly, component of the RNA polymerase I (Pol I), RNA polymerase II (Pol II) and RNA polymerase III (Pol III) complexes consisting of at least 13, 12 and 17 subunits, respectively.

The protein resides in the nucleus. In terms of biological role, DNA-dependent RNA polymerase catalyzes the transcription of DNA into RNA using the four ribonucleoside triphosphates as substrates. Common component of RNA polymerases I, II and III which synthesize ribosomal RNA precursors, mRNA precursors and many functional non-coding RNAs, and a small RNAs, such as 5S rRNA and tRNAs, respectively. This chain is DNA-directed RNA polymerases I, II, and III subunit rpabc4 (polr2k), found in Dictyostelium discoideum (Social amoeba).